A 447-amino-acid polypeptide reads, in one-letter code: Chromosomal replication initiator protein DnaA (447 aa).

Residues 1 to 66 are domain I, interacts with DnaA modulators; it reads MSNRIISILK…SKAIKEAYGK (66 aa). The interval 66 to 102 is domain II; the sequence is KNLDYEIVYETTEPEAFNKSNESYKGPLVKKKPLLIS. The tract at residues 103–319 is domain III, AAA+ region; it reads NLNANYTFEN…GVIIKLIVQS (217 aa). Gly-146, Gly-148, Lys-149, and Thr-150 together coordinate ATP. The domain IV, binds dsDNA stretch occupies residues 320–447; sequence SINKERIGAA…NTMATSSAAG (128 aa).

Belongs to the DnaA family. As to quaternary structure, oligomerizes as a right-handed, spiral filament on DNA at oriC.

Its subcellular location is the cytoplasm. Plays an essential role in the initiation and regulation of chromosomal replication. ATP-DnaA binds to the origin of replication (oriC) to initiate formation of the DNA replication initiation complex once per cell cycle. Binds the DnaA box (a 9 base pair repeat at the origin) and separates the double-stranded (ds)DNA. Forms a right-handed helical filament on oriC DNA; dsDNA binds to the exterior of the filament while single-stranded (ss)DNA is stabiized in the filament's interior. The ATP-DnaA-oriC complex binds and stabilizes one strand of the AT-rich DNA unwinding element (DUE), permitting loading of DNA polymerase. After initiation quickly degrades to an ADP-DnaA complex that is not apt for DNA replication. Binds acidic phospholipids. This Kosmotoga olearia (strain ATCC BAA-1733 / DSM 21960 / TBF 19.5.1) protein is Chromosomal replication initiator protein DnaA.